The following is a 336-amino-acid chain: Glycerol-3-phosphate dehydrogenase [NAD(P)+] (336 aa).

Positions 11, 12, 32, 33, and 110 each coordinate NADPH. Sn-glycerol 3-phosphate contacts are provided by K110 and G140. Residue A144 participates in NADPH binding. Positions 195, 248, 258, 259, and 260 each coordinate sn-glycerol 3-phosphate. K195 (proton acceptor) is an active-site residue. R259 is a binding site for NADPH. Positions 284 and 286 each coordinate NADPH.

Belongs to the NAD-dependent glycerol-3-phosphate dehydrogenase family.

The protein localises to the cytoplasm. The enzyme catalyses sn-glycerol 3-phosphate + NAD(+) = dihydroxyacetone phosphate + NADH + H(+). It carries out the reaction sn-glycerol 3-phosphate + NADP(+) = dihydroxyacetone phosphate + NADPH + H(+). It participates in membrane lipid metabolism; glycerophospholipid metabolism. Its function is as follows. Catalyzes the reduction of the glycolytic intermediate dihydroxyacetone phosphate (DHAP) to sn-glycerol 3-phosphate (G3P), the key precursor for phospholipid synthesis. In Nocardia farcinica (strain IFM 10152), this protein is Glycerol-3-phosphate dehydrogenase [NAD(P)+].